Consider the following 383-residue polypeptide: Centractin (383 aa).

The segment at 227 to 246 (PQKEEELLEPDSSSSKPVQP) is disordered.

Belongs to the actin family. ARP1 subfamily.

It localises to the cytoplasm. It is found in the cytoskeleton. Its subcellular location is the microtubule organizing center. The protein resides in the centrosome. Functionally, component of a multi-subunit complex, PPK2 (poly P kinase complex 2) involved in microtubule based vesicle motility. It is associated with the centrosome. PPK2 complex can synthesize a poly chain of hundreds of phosphate residues linked by ATP-like bonds. The sequence is that of Centractin (arpA) from Dictyostelium discoideum (Social amoeba).